The sequence spans 329 residues: GTP 3',8-cyclase (329 aa).

A Radical SAM core domain is found at 8 to 234 (AFARKFYYLR…QLRQRSDGPA (227 aa)). Position 17 (arginine 17) interacts with GTP. Residues cysteine 24 and cysteine 28 each coordinate [4Fe-4S] cluster. Tyrosine 30 contacts S-adenosyl-L-methionine. Cysteine 31 contacts [4Fe-4S] cluster. Arginine 68 contributes to the GTP binding site. An S-adenosyl-L-methionine-binding site is contributed by glycine 72. Residue threonine 99 participates in GTP binding. S-adenosyl-L-methionine is bound at residue serine 123. Lysine 160 is a GTP binding site. Methionine 194 contributes to the S-adenosyl-L-methionine binding site. Positions 257 and 260 each coordinate [4Fe-4S] cluster. 262-264 (RLR) is a binding site for GTP. Position 274 (cysteine 274) interacts with [4Fe-4S] cluster.

Belongs to the radical SAM superfamily. MoaA family. In terms of assembly, monomer and homodimer. It depends on [4Fe-4S] cluster as a cofactor.

The enzyme catalyses GTP + AH2 + S-adenosyl-L-methionine = (8S)-3',8-cyclo-7,8-dihydroguanosine 5'-triphosphate + 5'-deoxyadenosine + L-methionine + A + H(+). The protein operates within cofactor biosynthesis; molybdopterin biosynthesis. Its function is as follows. Catalyzes the cyclization of GTP to (8S)-3',8-cyclo-7,8-dihydroguanosine 5'-triphosphate. In Shigella sonnei (strain Ss046), this protein is GTP 3',8-cyclase.